The following is a 162-amino-acid chain: Transcription elongation factor GreB (162 aa).

Positions 52-73 form a coiled coil; the sequence is KKLLREIDRRVRYLRKRLEDVK.

This sequence belongs to the GreA/GreB family. GreB subfamily.

Functionally, necessary for efficient RNA polymerase transcription elongation past template-encoded arresting sites. The arresting sites in DNA have the property of trapping a certain fraction of elongating RNA polymerases that pass through, resulting in locked ternary complexes. Cleavage of the nascent transcript by cleavage factors such as GreA or GreB allows the resumption of elongation from the new 3'terminus. GreB releases sequences of up to 9 nucleotides in length. The polypeptide is Transcription elongation factor GreB (Pseudomonas putida (strain ATCC 47054 / DSM 6125 / CFBP 8728 / NCIMB 11950 / KT2440)).